Reading from the N-terminus, the 449-residue chain is Cysteine--tRNA ligase (449 aa).

Cys-30 is a Zn(2+) binding site. Residues 32 to 42 (PTVYDRAHLGN) carry the 'HIGH' region motif. Residues Cys-210, His-235, and Glu-239 each coordinate Zn(2+). The 'KMSKS' region motif lies at 268–272 (KMSKS). Lys-271 serves as a coordination point for ATP.

The protein belongs to the class-I aminoacyl-tRNA synthetase family. As to quaternary structure, monomer. The cofactor is Zn(2+).

It is found in the cytoplasm. The enzyme catalyses tRNA(Cys) + L-cysteine + ATP = L-cysteinyl-tRNA(Cys) + AMP + diphosphate. The protein is Cysteine--tRNA ligase of Acidiphilium cryptum (strain JF-5).